Consider the following 221-residue polypeptide: Large ribosomal subunit protein uL3 (221 aa).

Belongs to the universal ribosomal protein uL3 family. As to quaternary structure, part of the 50S ribosomal subunit. Forms a cluster with proteins L14 and L19.

Its function is as follows. One of the primary rRNA binding proteins, it binds directly near the 3'-end of the 23S rRNA, where it nucleates assembly of the 50S subunit. The polypeptide is Large ribosomal subunit protein uL3 (Chlamydia muridarum (strain MoPn / Nigg)).